A 215-amino-acid chain; its full sequence is Recombination protein RecR (215 aa).

The segment at 74–89 adopts a C4-type zinc-finger fold; sequence CQRCGHLSADPICDIC. Residues 97-191 form the Toprim domain; the sequence is GVICVVADSR…RVTRIAYGLP (95 aa).

It belongs to the RecR family.

Its function is as follows. May play a role in DNA repair. It seems to be involved in an RecBC-independent recombinational process of DNA repair. It may act with RecF and RecO. This Synechococcus sp. (strain RCC307) protein is Recombination protein RecR.